Reading from the N-terminus, the 333-residue chain is NADH-quinone oxidoreductase subunit H (333 aa).

Helical transmembrane passes span 15–35, 88–108, 117–137, 165–185, 191–211, 241–261, 274–294, and 313–333; these read IALFFGLGALLLAVVLAFVTY, YVLAPIIAFVPSFMVLAVLPF, IGVGLLYYIAVSGLTTVGVVA, LVMSALGVVLLAGSMNLVDIV, VWFIFAQPLAFLIFLIAAVAE, FFMLAEYVYLFAMAALVTILF, IPGAVWFALKFCAVVFVLIWF, and VLLPLSLVNIVLTAVVKAWFF.

It belongs to the complex I subunit 1 family. As to quaternary structure, NDH-1 is composed of 14 different subunits. Subunits NuoA, H, J, K, L, M, N constitute the membrane sector of the complex.

The protein localises to the cell membrane. The catalysed reaction is a quinone + NADH + 5 H(+)(in) = a quinol + NAD(+) + 4 H(+)(out). Functionally, NDH-1 shuttles electrons from NADH, via FMN and iron-sulfur (Fe-S) centers, to quinones in the respiratory chain. The immediate electron acceptor for the enzyme in this species is believed to be ubiquinone. Couples the redox reaction to proton translocation (for every two electrons transferred, four hydrogen ions are translocated across the cytoplasmic membrane), and thus conserves the redox energy in a proton gradient. This subunit may bind ubiquinone. This Geobacillus kaustophilus (strain HTA426) protein is NADH-quinone oxidoreductase subunit H.